The following is a 136-amino-acid chain: Large ribosomal subunit protein bL21 (136 aa).

This sequence belongs to the bacterial ribosomal protein bL21 family. Part of the 50S ribosomal subunit. Contacts protein L20.

In terms of biological role, this protein binds to 23S rRNA in the presence of protein L20. The chain is Large ribosomal subunit protein bL21 from Gloeothece citriformis (strain PCC 7424) (Cyanothece sp. (strain PCC 7424)).